Reading from the N-terminus, the 210-residue chain is Ribosomal RNA small subunit methyltransferase G (210 aa).

Residues Gly-77, Phe-82, 100-102 (ERS), 128-129 (VE), and Arg-141 each bind S-adenosyl-L-methionine.

Belongs to the methyltransferase superfamily. RNA methyltransferase RsmG family.

The protein localises to the cytoplasm. In terms of biological role, specifically methylates the N7 position of a guanine in 16S rRNA. The sequence is that of Ribosomal RNA small subunit methyltransferase G from Borrelia recurrentis (strain A1).